Consider the following 208-residue polypeptide: Interleukin-6 (208 aa).

Positions 1-20 are cleaved as a signal peptide; it reads MNSLSTIAFSLGLLLVTATA. Residues cysteine 67 and cysteine 73 are joined by a disulfide bond. Serine 76 carries the phosphoserine modification. Cysteine 96 and cysteine 106 are joined by a disulfide. A glycan (N-linked (GlcNAc...) asparagine) is linked at asparagine 167.

The protein belongs to the IL-6 superfamily. In terms of assembly, component of a hexamer of two molecules each of IL6, IL6R and IL6ST; first binds to IL6R to associate with the signaling subunit IL6ST. Interacts with IL6R (via the N-terminal ectodomain); this interaction may be affected by IL6R-binding with SORL1, hence decreasing IL6 cis signaling. Interacts with SORL1 (via the N-terminal ectodomain); this interaction leads to IL6 internalization and lysosomal degradation. May form a trimeric complex with the soluble SORL1 ectodomain and soluble IL6R receptor; this interaction might stabilize circulating IL6, hence promoting IL6 trans signaling.

Its subcellular location is the secreted. Cytokine with a wide variety of biological functions in immunity, tissue regeneration, and metabolism. Binds to IL6R, then the complex associates to the signaling subunit IL6ST/gp130 to trigger the intracellular IL6-signaling pathway. The interaction with the membrane-bound IL6R and IL6ST stimulates 'classic signaling', whereas the binding of IL6 and soluble IL6R to IL6ST stimulates 'trans-signaling'. Alternatively, 'cluster signaling' occurs when membrane-bound IL6:IL6R complexes on transmitter cells activate IL6ST receptors on neighboring receiver cells. Functionally, IL6 is a potent inducer of the acute phase response. Rapid production of IL6 contributes to host defense during infection and tissue injury, but excessive IL6 synthesis is involved in disease pathology. In the innate immune response, is synthesized by myeloid cells, such as macrophages and dendritic cells, upon recognition of pathogens through toll-like receptors (TLRs) at the site of infection or tissue injury. In the adaptive immune response, is required for the differentiation of B cells into immunoglobulin-secreting cells. Plays a major role in the differentiation of CD4(+) T cell subsets. Essential factor for the development of T follicular helper (Tfh) cells that are required for the induction of germinal-center formation. Required to drive naive CD4(+) T cells to the Th17 lineage. Also required for proliferation of myeloma cells and the survival of plasmablast cells. In terms of biological role, acts as an essential factor in bone homeostasis and on vessels directly or indirectly by induction of VEGF, resulting in increased angiogenesis activity and vascular permeability. Induces, through 'trans-signaling' and synergistically with IL1B and TNF, the production of VEGF. Involved in metabolic controls, is discharged into the bloodstream after muscle contraction increasing lipolysis and improving insulin resistance. 'Trans-signaling' in central nervous system also regulates energy and glucose homeostasis. Mediates, through GLP-1, crosstalk between insulin-sensitive tissues, intestinal L cells and pancreatic islets to adapt to changes in insulin demand. Also acts as a myokine. Plays a protective role during liver injury, being required for maintenance of tissue regeneration. Also has a pivotal role in iron metabolism by regulating HAMP/hepcidin expression upon inflammation or bacterial infection. Through activation of IL6ST-YAP-NOTCH pathway, induces inflammation-induced epithelial regeneration. This chain is Interleukin-6 (IL6), found in Delphinapterus leucas (Beluga whale).